We begin with the raw amino-acid sequence, 374 residues long: Chaperone protein DnaJ (374 aa).

Residues 5 to 70 form the J domain; sequence DYYEILGVSR…QKRAAYDQYG (66 aa). The segment at 129–207 adopts a CR-type zinc-finger fold; the sequence is GVTREIRIPT…CHGHGRVEKS (79 aa). Cys142, Cys145, Cys159, Cys162, Cys181, Cys184, Cys195, and Cys198 together coordinate Zn(2+). 4 CXXCXGXG motif repeats span residues 142 to 149, 159 to 166, 181 to 188, and 195 to 202; these read CDVCHGSG, CPTCHGQG, CPTCQGQG, and CTKCHGHG.

This sequence belongs to the DnaJ family. In terms of assembly, homodimer. It depends on Zn(2+) as a cofactor.

It localises to the cytoplasm. Participates actively in the response to hyperosmotic and heat shock by preventing the aggregation of stress-denatured proteins and by disaggregating proteins, also in an autonomous, DnaK-independent fashion. Unfolded proteins bind initially to DnaJ; upon interaction with the DnaJ-bound protein, DnaK hydrolyzes its bound ATP, resulting in the formation of a stable complex. GrpE releases ADP from DnaK; ATP binding to DnaK triggers the release of the substrate protein, thus completing the reaction cycle. Several rounds of ATP-dependent interactions between DnaJ, DnaK and GrpE are required for fully efficient folding. Also involved, together with DnaK and GrpE, in the DNA replication of plasmids through activation of initiation proteins. This Sodalis glossinidius (strain morsitans) protein is Chaperone protein DnaJ.